An 834-amino-acid chain; its full sequence is Periplasmic nitrate reductase (834 aa).

Residues 1-31 (MSSELTRRNLLKAHAAGIAAATAGIALPAAA) constitute a signal peptide (tat-type signal). Residues 43–99 (IKWSKAPCRFCGTGCGVMVGVKEGKVVATHGDMQAEVNRGLNCIKGYFLSKIMYGKD) enclose the 4Fe-4S Mo/W bis-MGD-type domain. Residues Cys50, Cys53, Cys57, and Cys85 each coordinate [4Fe-4S] cluster. Mo-bis(molybdopterin guanine dinucleotide) contacts are provided by residues Lys87, Gln154, Asn179, Cys183, 216–223 (WGSNMAEM), 247–251 (STFTH), 266–268 (GTD), Met377, Gln381, Asn487, 513–514 (SD), Lys536, Asp563, and 723–732 (TGRVLEHWHS). Trp799 provides a ligand contact to substrate. Mo-bis(molybdopterin guanine dinucleotide)-binding residues include Asn807 and Lys824.

This sequence belongs to the prokaryotic molybdopterin-containing oxidoreductase family. NasA/NapA/NarB subfamily. In terms of assembly, component of the periplasmic nitrate reductase NapAB complex composed of NapA and NapB. The cofactor is [4Fe-4S] cluster. It depends on Mo-bis(molybdopterin guanine dinucleotide) as a cofactor. Post-translationally, predicted to be exported by the Tat system. The position of the signal peptide cleavage has not been experimentally proven.

It is found in the periplasm. It catalyses the reaction 2 Fe(II)-[cytochrome] + nitrate + 2 H(+) = 2 Fe(III)-[cytochrome] + nitrite + H2O. Functionally, catalytic subunit of the periplasmic nitrate reductase complex NapAB. Receives electrons from NapB and catalyzes the reduction of nitrate to nitrite. This is Periplasmic nitrate reductase from Agrobacterium fabrum (strain C58 / ATCC 33970) (Agrobacterium tumefaciens (strain C58)).